We begin with the raw amino-acid sequence, 396 residues long: uncharacterized protein (396 aa).

It belongs to the mycobacterial PPE family.

This is an uncharacterized protein from Mycobacterium tuberculosis (strain CDC 1551 / Oshkosh).